The following is a 181-amino-acid chain: Caveolin-1 (181 aa).

Residues 1–107 (MTGGLRDGEK…TKYWCYRLLT (107 aa)) are Cytoplasmic-facing. The segment at residues 108–128 (ALVGIPLALIWGIFFAILSFI) is an intramembrane region (helical). The Cytoplasmic segment spans residues 129–181 (HIWAVVPCVKSYLIEIHCISRVYSICVHTFCDPLFEAMGKCLGGVRIRTSKEV). S-palmitoyl cysteine attachment occurs at residues cysteine 136, cysteine 146, and cysteine 159.

It belongs to the caveolin family. As to quaternary structure, homooligomer.

It is found in the golgi apparatus membrane. It localises to the cell membrane. The protein resides in the membrane. Its subcellular location is the caveola. The protein localises to the membrane raft. May act as a positive regulator of T-cell coactivation. May act as a scaffolding protein within caveolar membranes. Interacts directly with G-protein alpha subunits and can functionally regulate their activity. This is Caveolin-1 (cav1) from Takifugu rubripes (Japanese pufferfish).